Here is a 138-residue protein sequence, read N- to C-terminus: MAQNRFHSGTGPSQRQLRVGELIRRTLSDVLLRGDVHDPELNRHSITVGEVRTSPDLKVATAYVLPLGGHDAEEALAALRRNAGELRHLVAKAMTLKYAPQLRFVLDETFDRMDDTRRLLSEDRVRRDVESHPEDDED.

Belongs to the RbfA family. In terms of assembly, monomer. Binds 30S ribosomal subunits, but not 50S ribosomal subunits or 70S ribosomes.

The protein resides in the cytoplasm. One of several proteins that assist in the late maturation steps of the functional core of the 30S ribosomal subunit. Associates with free 30S ribosomal subunits (but not with 30S subunits that are part of 70S ribosomes or polysomes). Required for efficient processing of 16S rRNA. May interact with the 5'-terminal helix region of 16S rRNA. This is Ribosome-binding factor A from Paracoccus denitrificans (strain Pd 1222).